The following is a 267-amino-acid chain: GTP cyclohydrolase MptA (267 aa).

It belongs to the GTP cyclohydrolase IV family. As to quaternary structure, homodimer. It depends on Fe(2+) as a cofactor.

It carries out the reaction GTP + H2O = 7,8-dihydroneopterin 2',3'-cyclic phosphate + formate + diphosphate + H(+). It participates in cofactor biosynthesis; 5,6,7,8-tetrahydromethanopterin biosynthesis. In terms of biological role, converts GTP to 7,8-dihydro-D-neopterin 2',3'-cyclic phosphate, the first intermediate in the biosynthesis of coenzyme methanopterin. This is GTP cyclohydrolase MptA from Thermococcus kodakarensis (strain ATCC BAA-918 / JCM 12380 / KOD1) (Pyrococcus kodakaraensis (strain KOD1)).